The primary structure comprises 434 residues: UDP-glucose 6-dehydrogenase (434 aa).

NAD(+) contacts are provided by residues 2 to 19, V11, D30, K35, T121, and E152; that span reads NITFIGSGYVGLVSGVMM. Residues 148–152, K204, N208, 249–253, and G257 each bind substrate; these read EFLRE and FLNAG. The active-site Nucleophile is C260. NAD(+) is bound at residue K263. A substrate-binding site is contributed by K321. R328 is an NAD(+) binding site.

This sequence belongs to the UDP-glucose/GDP-mannose dehydrogenase family.

It catalyses the reaction UDP-alpha-D-glucose + 2 NAD(+) + H2O = UDP-alpha-D-glucuronate + 2 NADH + 3 H(+). The protein operates within nucleotide-sugar biosynthesis; UDP-alpha-D-glucuronate biosynthesis; UDP-alpha-D-glucuronate from UDP-alpha-D-glucose: step 1/1. This is UDP-glucose 6-dehydrogenase (udg) from Rickettsia bellii (strain RML369-C).